Consider the following 422-residue polypeptide: Histidine--tRNA ligase (422 aa).

This sequence belongs to the class-II aminoacyl-tRNA synthetase family. As to quaternary structure, homodimer.

It localises to the cytoplasm. It carries out the reaction tRNA(His) + L-histidine + ATP = L-histidyl-tRNA(His) + AMP + diphosphate + H(+). This Vibrio atlanticus (strain LGP32) (Vibrio splendidus (strain Mel32)) protein is Histidine--tRNA ligase.